The primary structure comprises 207 residues: Nuclear transcription factor Y subunit beta (207 aa).

Positions 1–52 (MTMDGDSSTTDASQLGISADYIGGSHYVIQPHDDTEDSMNDHEDTNGSKESF) are a domain. A disordered region spans residues 27–52 (YVIQPHDDTEDSMNDHEDTNGSKESF). Residues 39-52 (MNDHEDTNGSKESF) are compositionally biased toward basic and acidic residues. The b domain stretch occupies residues 53-142 (REQDIYLPIA…PLKLYLQKFR (90 aa)). Residues 59-65 (LPIANVA) mediate DNA binding. The tract at residues 86 to 97 (VQECVSEFISFI) is subunit association domain (SAD). Lys-140 is covalently cross-linked (Glycyl lysine isopeptide (Lys-Gly) (interchain with G-Cter in ubiquitin)). Positions 143–207 (EAMKGEKGIG…ISGVQQIQFS (65 aa)) are c domain.

Belongs to the NFYB/HAP3 subunit family. Heterotrimeric transcription factor composed of three components, NF-YA, NF-YB and NF-YC. NF-YB and NF-YC must interact and dimerize for NF-YA association and DNA binding. Interacts with C1QBP. In terms of processing, monoubiquitination at Lys-140 plays an important role in transcriptional activation by allowing the deposition of histone H3 methylations as well as histone H2B monoubiquitination at 'Lys-121'.

The protein localises to the nucleus. Functionally, component of the sequence-specific heterotrimeric transcription factor (NF-Y) which specifically recognizes a 5'-CCAAT-3' box motif found in the promoters of its target genes. NF-Y can function as both an activator and a repressor, depending on its interacting cofactors. The chain is Nuclear transcription factor Y subunit beta (NFYB) from Homo sapiens (Human).